We begin with the raw amino-acid sequence, 739 residues long: Catalase-peroxidase (739 aa).

An N-terminal signal peptide occupies residues 1–23; the sequence is MLKKIVTALGMSGMLLASNSAIA. The tryptophyl-tyrosyl-methioninium (Trp-Tyr) (with M-247) cross-link spans 100–221; that stretch reads WHDAGTYRIY…YAATQMGLIY (122 aa). The Proton acceptor role is filled by H101. The segment at residues 221 to 247 is a cross-link (tryptophyl-tyrosyl-methioninium (Tyr-Met) (with W-100)); it reads YVNPEGPDGKPDIKGAASEIRQAFRAM. H262 serves as a coordination point for heme b.

The protein belongs to the peroxidase family. Peroxidase/catalase subfamily. In terms of assembly, homodimer or homotetramer. Requires heme b as cofactor. Formation of the three residue Trp-Tyr-Met cross-link is important for the catalase, but not the peroxidase activity of the enzyme.

The enzyme catalyses H2O2 + AH2 = A + 2 H2O. It catalyses the reaction 2 H2O2 = O2 + 2 H2O. Bifunctional enzyme with both catalase and broad-spectrum peroxidase activity. In Francisella tularensis subsp. novicida (strain U112), this protein is Catalase-peroxidase.